A 389-amino-acid polypeptide reads, in one-letter code: Succinyl-diaminopimelate desuccinylase (389 aa).

A Zn(2+)-binding site is contributed by His-72. Asp-74 is a catalytic residue. Asp-105 serves as a coordination point for Zn(2+). Glu-144 functions as the Proton acceptor in the catalytic mechanism. Zn(2+) is bound by residues Glu-145, Glu-173, and His-362.

The protein belongs to the peptidase M20A family. DapE subfamily. In terms of assembly, homodimer. It depends on Zn(2+) as a cofactor. Co(2+) is required as a cofactor.

It catalyses the reaction N-succinyl-(2S,6S)-2,6-diaminopimelate + H2O = (2S,6S)-2,6-diaminopimelate + succinate. It functions in the pathway amino-acid biosynthesis; L-lysine biosynthesis via DAP pathway; LL-2,6-diaminopimelate from (S)-tetrahydrodipicolinate (succinylase route): step 3/3. Its function is as follows. Catalyzes the hydrolysis of N-succinyl-L,L-diaminopimelic acid (SDAP), forming succinate and LL-2,6-diaminopimelate (DAP), an intermediate involved in the bacterial biosynthesis of lysine and meso-diaminopimelic acid, an essential component of bacterial cell walls. This is Succinyl-diaminopimelate desuccinylase from Rhodopseudomonas palustris (strain HaA2).